A 421-amino-acid chain; its full sequence is 4-hydroxy-3-methylbut-2-en-1-yl diphosphate synthase (flavodoxin) (421 aa).

Residues cysteine 311, cysteine 314, cysteine 357, and glutamate 364 each coordinate [4Fe-4S] cluster.

It belongs to the IspG family. It depends on [4Fe-4S] cluster as a cofactor.

The catalysed reaction is (2E)-4-hydroxy-3-methylbut-2-enyl diphosphate + oxidized [flavodoxin] + H2O + 2 H(+) = 2-C-methyl-D-erythritol 2,4-cyclic diphosphate + reduced [flavodoxin]. The protein operates within isoprenoid biosynthesis; isopentenyl diphosphate biosynthesis via DXP pathway; isopentenyl diphosphate from 1-deoxy-D-xylulose 5-phosphate: step 5/6. In terms of biological role, converts 2C-methyl-D-erythritol 2,4-cyclodiphosphate (ME-2,4cPP) into 1-hydroxy-2-methyl-2-(E)-butenyl 4-diphosphate. The chain is 4-hydroxy-3-methylbut-2-en-1-yl diphosphate synthase (flavodoxin) from Xanthomonas euvesicatoria pv. vesicatoria (strain 85-10) (Xanthomonas campestris pv. vesicatoria).